The chain runs to 417 residues: Gamma-glutamyl phosphate reductase (417 aa).

It belongs to the gamma-glutamyl phosphate reductase family.

It is found in the cytoplasm. It carries out the reaction L-glutamate 5-semialdehyde + phosphate + NADP(+) = L-glutamyl 5-phosphate + NADPH + H(+). Its pathway is amino-acid biosynthesis; L-proline biosynthesis; L-glutamate 5-semialdehyde from L-glutamate: step 2/2. Catalyzes the NADPH-dependent reduction of L-glutamate 5-phosphate into L-glutamate 5-semialdehyde and phosphate. The product spontaneously undergoes cyclization to form 1-pyrroline-5-carboxylate. In Klebsiella pneumoniae subsp. pneumoniae (strain ATCC 700721 / MGH 78578), this protein is Gamma-glutamyl phosphate reductase.